Consider the following 464-residue polypeptide: Protein FAM90A24 (464 aa).

Disordered regions lie at residues 1 to 42 (MMAR…DPRL), 69 to 389 (VPAT…HDGA), and 415 to 437 (HSPE…SEAP). 2 stretches are compositionally biased toward basic and acidic residues: residues 74–89 (GKKE…KPRG) and 97–114 (NKDK…DPQR). Residues 180–197 (LASLSPLRKASLSSSSSL) are compositionally biased toward low complexity.

The protein belongs to the FAM90 family.

This Homo sapiens (Human) protein is Protein FAM90A24.